The primary structure comprises 352 residues: Phenylalanine--tRNA ligase alpha subunit (352 aa).

A Mg(2+)-binding site is contributed by glutamate 258.

This sequence belongs to the class-II aminoacyl-tRNA synthetase family. Phe-tRNA synthetase alpha subunit type 1 subfamily. Tetramer of two alpha and two beta subunits. Mg(2+) serves as cofactor.

It is found in the cytoplasm. The catalysed reaction is tRNA(Phe) + L-phenylalanine + ATP = L-phenylalanyl-tRNA(Phe) + AMP + diphosphate + H(+). This is Phenylalanine--tRNA ligase alpha subunit from Staphylococcus haemolyticus (strain JCSC1435).